A 612-amino-acid chain; its full sequence is Protein MUK1 (612 aa).

Residues 40 to 50 (EDQNDNERSSC) show a composition bias toward basic and acidic residues. Positions 40–66 (EDQNDNERSSCDGDENSTTGERLENNK) are disordered. The segment covering 55–66 (NSTTGERLENNK) has biased composition (polar residues). Residues serine 67, serine 163, serine 185, and serine 245 each carry the phosphoserine modification. The VPS9 domain occupies 273–414 (TEYNKLLNEK…VEGLTKNDFS (142 aa)). A disordered region spans residues 494–560 (IRSYTPPHPN…SSASLEHGNR (67 aa)). Positions 503-517 (NNTSNNNLHSSNNLN) are enriched in low complexity. Residues 518–529 (IPRSSSQLSMEL) show a composition bias toward polar residues. The segment covering 530–542 (SNRDTTEMSRDGS) has biased composition (basic and acidic residues). A compositionally biased stretch (low complexity) spans 543–554 (RSTSSSSRSSAS).

It localises to the cytoplasm. Its function is as follows. Putative GTPase-activating protein. In Saccharomyces cerevisiae (strain ATCC 204508 / S288c) (Baker's yeast), this protein is Protein MUK1 (MUK1).